The sequence spans 75 residues: DNA-directed RNA polymerase subunit omega (75 aa).

It belongs to the RNA polymerase subunit omega family. In terms of assembly, in cyanobacteria the RNAP catalytic core is composed of 2 alpha, 1 beta, 1 beta', 1 gamma and 1 omega subunit. When a sigma factor is associated with the core the holoenzyme is formed, which can initiate transcription.

It catalyses the reaction RNA(n) + a ribonucleoside 5'-triphosphate = RNA(n+1) + diphosphate. Functionally, promotes RNA polymerase assembly. Latches the N- and C-terminal regions of the beta' subunit thereby facilitating its interaction with the beta and alpha subunits. This Parasynechococcus marenigrum (strain WH8102) protein is DNA-directed RNA polymerase subunit omega.